Reading from the N-terminus, the 394-residue chain is GTPase Era, mitochondrial (394 aa).

The 249-residue stretch at 32 to 280 folds into the Era-type G domain; the sequence is KCLQLAVIGA…RDHLMSISPQ (249 aa). The tract at residues 40 to 47 is G1; the sequence is GAPNVGKS. 40–47 contacts GTP; sequence GAPNVGKS. The tract at residues 66–70 is G2; it reads DTTTR. Residues 87–90 are G3; sequence DSPG. GTP is bound by residues 87–91 and 160–163; these read DSPGA and NKID. The segment at 160–163 is G4; sequence NKID. The G5 stretch occupies residues 259-261; it reads VSS.

The protein belongs to the TRAFAC class TrmE-Era-EngA-EngB-Septin-like GTPase superfamily. Era GTPase family.

The protein localises to the mitochondrion matrix. The protein resides in the mitochondrion inner membrane. In terms of biological role, probable GTPase that plays a role in the mitochondrial ribosomal small subunit assembly. Specifically binds the 12S mitochondrial rRNA (12S mt-rRNA) to a 33 nucleotide section delineating the 3' terminal stem-loop region. May act as a chaperone that protects the 12S mt-rRNA on the 28S mitoribosomal subunit during ribosomal small subunit assembly. May play a role in positively regulating mitochondrial function. Plays a role in fertility. The protein is GTPase Era, mitochondrial of Caenorhabditis elegans.